The following is a 143-amino-acid chain: Dehydrin DHN2 (143 aa).

Over residues 1 to 10 the composition is skewed to polar residues; sequence MEYQGQTGHA. Residues 1–143 are disordered; the sequence is MEYQGQTGHA…IKEKLPGGQH (143 aa). The segment covering 24–34 has biased composition (gly residues); sequence GHGGATGGPTG. The segment covering 35–46 has biased composition (low complexity); it reads THGAAAAAAGTG. Residues 51–61 show a composition bias toward basic and acidic residues; the sequence is TRDDHKTDGVL. The span at 62–71 shows a compositional bias: low complexity; sequence RRSGSSSSSS. A compositionally biased stretch (basic and acidic residues) spans 86-101; that stretch reads KEKIKEKLPGGAHKDA. Over residues 109-123 the composition is skewed to low complexity; that stretch reads AAGEYAGTGTHGAEA. Basic and acidic residues predominate over residues 124–143; the sequence is TGEKKGVMDKIKEKLPGGQH.

The protein belongs to the plant dehydrin family.

This Hordeum vulgare (Barley) protein is Dehydrin DHN2 (DHN2).